The following is a 522-amino-acid chain: Perilipin-1 (522 aa).

Serine 81 is modified (phosphoserine). Position 85 is a phosphothreonine (threonine 85). Serine 126, serine 130, serine 132, serine 137, and serine 174 each carry phosphoserine. Disordered stretches follow at residues 195 to 217 (DKEESAPAPGHQQAQKSPKAKPS) and 287 to 318 (LAAAQEEDHEDQTDTEGEDTEEEEELETEENK). Residues 291–314 (QEEDHEDQTDTEGEDTEEEEELET) show a composition bias toward acidic residues. The interval 291–319 (QEEDHEDQTDTEGEDTEEEEELETEENKF) is required for interaction with CIDEC. Threonine 299 and threonine 301 each carry phosphothreonine. Phosphoserine occurs at positions 382, 384, and 408. Residues 413–522 (ESEFRDIDNP…THYSQLRKKS (110 aa)) are disordered. A compositionally biased stretch (basic and acidic residues) spans 414–435 (SEFRDIDNPPAEVERREAERRA). Phosphoserine occurs at positions 436, 497, and 499.

The protein belongs to the perilipin family. As to quaternary structure, interacts with ABHD5. Interacts with CIDEC. Interacts with AQP7. In terms of processing, major cAMP-dependent protein kinase-substrate in adipocytes, also dephosphorylated by PP1. When phosphorylated, may be maximally sensitive to HSL and when unphosphorylated, may play a role in the inhibition of lipolysis, by acting as a barrier in lipid droplet. Detected in adipocytes from white adipose tissue (at protein level). Detected in visceral adipose tissue and mammary gland.

It is found in the endoplasmic reticulum. It localises to the lipid droplet. In terms of biological role, modulator of adipocyte lipid metabolism. Coats lipid storage droplets to protect them from breakdown by hormone-sensitive lipase (HSL). Its absence may result in leanness. Plays a role in unilocular lipid droplet formation by activating CIDEC. Their interaction promotes lipid droplet enlargement and directional net neutral lipid transfer. May modulate lipolysis and triglyceride levels. The sequence is that of Perilipin-1 (PLIN1) from Homo sapiens (Human).